A 694-amino-acid polypeptide reads, in one-letter code: Elongation factor G 2 (694 aa).

A tr-type G domain is found at 8–282 (TAIRNIGIMA…AVVSYLPSPL (275 aa)). Residues 17–24 (AHIDAGKT), 81–85 (DTPGH), and 135–138 (NKMD) contribute to the GTP site.

The protein belongs to the TRAFAC class translation factor GTPase superfamily. Classic translation factor GTPase family. EF-G/EF-2 subfamily.

It localises to the cytoplasm. Its function is as follows. Catalyzes the GTP-dependent ribosomal translocation step during translation elongation. During this step, the ribosome changes from the pre-translocational (PRE) to the post-translocational (POST) state as the newly formed A-site-bound peptidyl-tRNA and P-site-bound deacylated tRNA move to the P and E sites, respectively. Catalyzes the coordinated movement of the two tRNA molecules, the mRNA and conformational changes in the ribosome. The polypeptide is Elongation factor G 2 (Syntrophomonas wolfei subsp. wolfei (strain DSM 2245B / Goettingen)).